Reading from the N-terminus, the 900-residue chain is Nitrate reductase [NADH] (900 aa).

Position 172 (Cys-172) interacts with Mo-molybdopterin. The Cytochrome b5 heme-binding domain maps to 521 to 596 (TKMYSLSEVK…LEDYRVGELI (76 aa)). Positions 556 and 579 each coordinate heme. Residues 644-756 (REKIPCKLIS…KGPLGHIEYT (113 aa)) enclose the FAD-binding FR-type domain. FAD is bound by residues 696–699 (RAYT), 713–717 (VVKVY), Phe-718, Phe-725, 730–732 (AMS), and Thr-783.

Belongs to the nitrate reductase family. Homodimer. FAD serves as cofactor. Requires heme as cofactor. It depends on Mo-molybdopterin as a cofactor.

The enzyme catalyses nitrite + NAD(+) + H2O = nitrate + NADH + H(+). In terms of biological role, nitrate reductase is a key enzyme involved in the first step of nitrate assimilation in plants, fungi and bacteria. The polypeptide is Nitrate reductase [NADH] (NIA) (Lotus japonicus (Lotus corniculatus var. japonicus)).